The following is a 131-amino-acid chain: Superoxide dismutase [Ni] (131 aa).

Positions 1–14 are excised as a propeptide; sequence MLSRLFAPKVTVSA. Ni(2+)-binding residues include His15, Cys16, and Cys20.

It belongs to the nickel superoxide dismutase family. Homohexamer. The hexameric protein has a roughly the shape of a hollow sphere with an outer diameter of 60 angstroms and a large interior cavity. Requires Ni(2+) as cofactor.

The protein resides in the cytoplasm. It catalyses the reaction 2 superoxide + 2 H(+) = H2O2 + O2. This chain is Superoxide dismutase [Ni] (sodN), found in Streptomyces coelicolor (strain ATCC BAA-471 / A3(2) / M145).